The chain runs to 124 residues: Small ribosomal subunit protein uS13 (124 aa).

A disordered region spans residues Val-98 to Lys-124.

It belongs to the universal ribosomal protein uS13 family. In terms of assembly, part of the 30S ribosomal subunit. Forms a loose heterodimer with protein S19. Forms two bridges to the 50S subunit in the 70S ribosome.

Its function is as follows. Located at the top of the head of the 30S subunit, it contacts several helices of the 16S rRNA. In the 70S ribosome it contacts the 23S rRNA (bridge B1a) and protein L5 of the 50S subunit (bridge B1b), connecting the 2 subunits; these bridges are implicated in subunit movement. Contacts the tRNAs in the A and P-sites. The polypeptide is Small ribosomal subunit protein uS13 (Dictyoglomus thermophilum (strain ATCC 35947 / DSM 3960 / H-6-12)).